We begin with the raw amino-acid sequence, 82 residues long: CLAVATA3/ESR (CLE)-related protein 53 (82 aa).

The signal sequence occupies residues 1–26 (MATSTNSREFLIFICVLTLLVVRSEA). Hydroxyproline occurs at positions 74 and 77. Residue Pro77 is glycosylated (O-linked (Ara...) hydroxyproline).

Belongs to the CLV3/ESR signal peptide family. Post-translationally, the O-glycosylation (arabinosylation) of the hydroxyproline Pro-77 enhances binding affinity of the CLE53p peptide for its receptor. As to expression, expressed in root vasculature.

It is found in the secreted. It localises to the extracellular space. In terms of biological role, signaling peptide involved in the regulation of root colonization by arbuscular mycorrhizal (AM) fungi. Moves from root to shoot to function with the receptor kinase SUNN, in a signaling pathway that repress strigolactone biosynthetic genes and strigolactone content in the roots, and consequently reduces the promotion of further colonization by AM fungi. The chain is CLAVATA3/ESR (CLE)-related protein 53 from Medicago truncatula (Barrel medic).